A 66-amino-acid polypeptide reads, in one-letter code: UPF0434 protein Mnod_1613 (66 aa).

It belongs to the UPF0434 family.

This Methylobacterium nodulans (strain LMG 21967 / CNCM I-2342 / ORS 2060) protein is UPF0434 protein Mnod_1613.